The sequence spans 202 residues: Small ribosomal subunit protein uS4c (202 aa).

One can recognise an S4 RNA-binding domain in the interval 90–154 (MRLDNIIFRL…SQSIITKNLN (65 aa)).

This sequence belongs to the universal ribosomal protein uS4 family. In terms of assembly, part of the 30S ribosomal subunit. Contacts protein S5. The interaction surface between S4 and S5 is involved in control of translational fidelity.

Its subcellular location is the plastid. The protein resides in the chloroplast. Its function is as follows. One of the primary rRNA binding proteins, it binds directly to 16S rRNA where it nucleates assembly of the body of the 30S subunit. Functionally, with S5 and S12 plays an important role in translational accuracy. The chain is Small ribosomal subunit protein uS4c (rps4) from Ricciocarpos natans (Liverwort).